The primary structure comprises 112 residues: Tyrosine-protein phosphatase 8 (112 aa).

Residues 1-112 (ENSTAIVMIT…ANSEYGPVVV (112 aa)) form the Tyrosine-protein phosphatase domain.

Belongs to the protein-tyrosine phosphatase family.

The catalysed reaction is O-phospho-L-tyrosyl-[protein] + H2O = L-tyrosyl-[protein] + phosphate. The sequence is that of Tyrosine-protein phosphatase 8 (STY-8) from Styela plicata (Wrinkled sea squirt).